A 333-amino-acid chain; its full sequence is 5-formaminoimidazole-4-carboxamide-1-(beta)-D-ribofuranosyl 5'-monophosphate synthetase (333 aa).

5-amino-1-(5-phospho-beta-D-ribosyl)imidazole-4-carboxamide-binding residues include His20 and Ser85. Positions 106 to 313 constitute an ATP-grasp domain; it reads RELIKWEADQ…YFDRPMDMGE (208 aa). Residues 136 to 187 and Glu209 contribute to the ATP site; that span reads PEEV…VPAY. Asn229 is a binding site for 5-amino-1-(5-phospho-beta-D-ribosyl)imidazole-4-carboxamide. Positions 268 and 281 each coordinate Mg(2+).

This sequence belongs to the phosphohexose mutase family. Requires Mg(2+) as cofactor. Mn(2+) serves as cofactor.

The enzyme catalyses 5-amino-1-(5-phospho-beta-D-ribosyl)imidazole-4-carboxamide + formate + ATP = 5-formamido-1-(5-phospho-D-ribosyl)imidazole-4-carboxamide + ADP + phosphate. The protein operates within purine metabolism; IMP biosynthesis via de novo pathway; 5-formamido-1-(5-phospho-D-ribosyl)imidazole-4-carboxamide from 5-amino-1-(5-phospho-D-ribosyl)imidazole-4-carboxamide (formate route): step 1/1. In terms of biological role, catalyzes the ATP- and formate-dependent formylation of 5-aminoimidazole-4-carboxamide-1-beta-d-ribofuranosyl 5'-monophosphate (AICAR) to 5-formaminoimidazole-4-carboxamide-1-beta-d-ribofuranosyl 5'-monophosphate (FAICAR) in the absence of folates. This Pyrobaculum islandicum (strain DSM 4184 / JCM 9189 / GEO3) protein is 5-formaminoimidazole-4-carboxamide-1-(beta)-D-ribofuranosyl 5'-monophosphate synthetase.